A 295-amino-acid polypeptide reads, in one-letter code: Pyridoxal 5'-phosphate synthase subunit PdxS (295 aa).

Residue Asp-25 coordinates D-ribose 5-phosphate. Lys-82 (schiff-base intermediate with D-ribose 5-phosphate) is an active-site residue. Position 154 (Gly-154) interacts with D-ribose 5-phosphate. D-glyceraldehyde 3-phosphate is bound at residue Arg-166. Residues Gly-215 and 236-237 (GS) contribute to the D-ribose 5-phosphate site.

The protein belongs to the PdxS/SNZ family. In terms of assembly, in the presence of PdxT, forms a dodecamer of heterodimers.

The catalysed reaction is aldehydo-D-ribose 5-phosphate + D-glyceraldehyde 3-phosphate + L-glutamine = pyridoxal 5'-phosphate + L-glutamate + phosphate + 3 H2O + H(+). The protein operates within cofactor biosynthesis; pyridoxal 5'-phosphate biosynthesis. Catalyzes the formation of pyridoxal 5'-phosphate from ribose 5-phosphate (RBP), glyceraldehyde 3-phosphate (G3P) and ammonia. The ammonia is provided by the PdxT subunit. Can also use ribulose 5-phosphate and dihydroxyacetone phosphate as substrates, resulting from enzyme-catalyzed isomerization of RBP and G3P, respectively. This is Pyridoxal 5'-phosphate synthase subunit PdxS from Staphylococcus haemolyticus (strain JCSC1435).